Reading from the N-terminus, the 140-residue chain is Nucleoside diphosphate kinase (140 aa).

Positions 11, 59, 87, 93, 104, and 114 each coordinate ATP. His117 functions as the Pros-phosphohistidine intermediate in the catalytic mechanism.

It belongs to the NDK family. As to quaternary structure, homotetramer. Mg(2+) serves as cofactor.

Its subcellular location is the cytoplasm. The enzyme catalyses a 2'-deoxyribonucleoside 5'-diphosphate + ATP = a 2'-deoxyribonucleoside 5'-triphosphate + ADP. It carries out the reaction a ribonucleoside 5'-diphosphate + ATP = a ribonucleoside 5'-triphosphate + ADP. Its function is as follows. Major role in the synthesis of nucleoside triphosphates other than ATP. The ATP gamma phosphate is transferred to the NDP beta phosphate via a ping-pong mechanism, using a phosphorylated active-site intermediate. This chain is Nucleoside diphosphate kinase, found in Granulibacter bethesdensis (strain ATCC BAA-1260 / CGDNIH1).